The chain runs to 444 residues: MFQKTDFLSKIFSSSSHPLTGSQNIVVKDPQTLDFAMQSQNEIVCSLRERSHMNTMSYAQTQMMAIDEIRAFQSEGHLHLKYISLIIAMMAETAVVTSRSWFPYFSCPSKSQRLAEAEGRILSALGIKYLARLIQIPFKNTEISTITVNCESEQPIVKAKYPIVLIHGFGAGVALWGSAIKRLAQFQTVHAFDLPGFGRSSRPKFSSDPETAETEMIDSIEQWRDKMNLEKMNLVGHSFGGYLATSYALKYPKRVENLILADPWGFNEMDPEFAQKLTSRQKNIFWVIQQFNPLAVLRLVGGYGPSLVRRLRPDLALKYSEDVYDYIYLANSRDPTGEEVFKCLSENLGWAKQPMSKRFHELDNTVPVTFIHGERSWIDWRTTRRLFGELEHVESHIMDSAGHHVYADDADKFVQLVIGSLKDGKTGELVPEEVNLEEEIVTPI.

The region spanning 162 to 409 (PIVLIHGFGA…SAGHHVYADD (248 aa)) is the AB hydrolase-1 domain.

It belongs to the peptidase S33 family. ABHD4/ABHD5 subfamily. As to quaternary structure, interacts with atgl-1; the interaction tethers atgl-1 to lipid droplets. In terms of tissue distribution, expressed in the hypodermis and intestine.

Its subcellular location is the lipid droplet. Its function is as follows. Acts coordinately with phospholipase atgl-1 within the lipolytic cascade to distribute stored energy to tissues to maintain energy levels during the dauer phase. Localizes atgl-1 to lipid droplets, possibly to facilitate triglyceride hydrolysis. Regulates lipid droplet size, lipid content, the exchange of lipids between lipid droplets and fusion of lipid droplets during the dauer phase. The sequence is that of Abhydrolase domain-containing protein abhd-5.2 from Caenorhabditis elegans.